Here is a 125-residue protein sequence, read N- to C-terminus: Histone H2A (125 aa).

A compositionally biased stretch (basic residues) spans methionine 1 to serine 18. A disordered region spans residues methionine 1–alanine 21. An N-acetylserine modification is found at serine 2. Serine 2 bears the Phosphoserine mark. Residue lysine 119 forms a Glycyl lysine isopeptide (Lys-Gly) (interchain with G-Cter in ubiquitin) linkage.

Belongs to the histone H2A family. The nucleosome is a histone octamer containing two molecules each of H2A, H2B, H3 and H4 assembled in one H3-H4 heterotetramer and two H2A-H2B heterodimers. The octamer wraps approximately 147 bp of DNA. Monoubiquitination of Lys-119 gives a specific tag for epigenetic transcriptional repression. Post-translationally, phosphorylation on Ser-2 is enhanced during mitosis. Phosphorylation on Ser-2 directly represses transcription.

The protein resides in the nucleus. The protein localises to the chromosome. Functionally, core component of nucleosome. Nucleosomes wrap and compact DNA into chromatin, limiting DNA accessibility to the cellular machineries which require DNA as a template. Histones thereby play a central role in transcription regulation, DNA repair, DNA replication and chromosomal stability. DNA accessibility is regulated via a complex set of post-translational modifications of histones, also called histone code, and nucleosome remodeling. This is Histone H2A from Chironomus thummi thummi (Midge).